The primary structure comprises 357 residues: Protein-glutamate methylesterase/protein-glutamine glutaminase 5 (357 aa).

One can recognise a Response regulatory domain in the interval 10 to 127 (RVLVVDDSSF…IDAQKAFKEE (118 aa)). The residue at position 61 (aspartate 61) is a 4-aspartylphosphate. The CheB-type methylesterase domain occupies 161–357 (PRPAGQRYQY…IGTEITKIAG (197 aa)). Residues serine 176, histidine 203, and aspartate 301 contribute to the active site.

This sequence belongs to the CheB family. Phosphorylated by CheA. Phosphorylation of the N-terminal regulatory domain activates the methylesterase activity.

Its subcellular location is the cytoplasm. It carries out the reaction [protein]-L-glutamate 5-O-methyl ester + H2O = L-glutamyl-[protein] + methanol + H(+). It catalyses the reaction L-glutaminyl-[protein] + H2O = L-glutamyl-[protein] + NH4(+). Involved in chemotaxis. Part of a chemotaxis signal transduction system that modulates chemotaxis in response to various stimuli. Catalyzes the demethylation of specific methylglutamate residues introduced into the chemoreceptors (methyl-accepting chemotaxis proteins or MCP) by CheR. Also mediates the irreversible deamidation of specific glutamine residues to glutamic acid. The sequence is that of Protein-glutamate methylesterase/protein-glutamine glutaminase 5 from Geobacter metallireducens (strain ATCC 53774 / DSM 7210 / GS-15).